A 787-amino-acid polypeptide reads, in one-letter code: Endonuclease MutS2 (787 aa).

Residue 334–341 (GPNTGGKT) coordinates ATP. The tract at residues 685-709 (KAQDPAKSAKQPRASVKRSGSSGMS) is disordered. Positions 712–787 (LDLRGHRYEE…GDGSTVVHFK (76 aa)) constitute a Smr domain.

This sequence belongs to the DNA mismatch repair MutS family. MutS2 subfamily. As to quaternary structure, homodimer. Binds to stalled ribosomes, contacting rRNA.

In terms of biological role, endonuclease that is involved in the suppression of homologous recombination and thus may have a key role in the control of bacterial genetic diversity. Acts as a ribosome collision sensor, splitting the ribosome into its 2 subunits. Detects stalled/collided 70S ribosomes which it binds and splits by an ATP-hydrolysis driven conformational change. Acts upstream of the ribosome quality control system (RQC), a ribosome-associated complex that mediates the extraction of incompletely synthesized nascent chains from stalled ribosomes and their subsequent degradation. Probably generates substrates for RQC. In Levilactobacillus brevis (strain ATCC 367 / BCRC 12310 / CIP 105137 / JCM 1170 / LMG 11437 / NCIMB 947 / NCTC 947) (Lactobacillus brevis), this protein is Endonuclease MutS2.